Consider the following 1545-residue polypeptide: Tricalbin-3 (1545 aa).

Positions methionine 1 to serine 89 are disordered. At methionine 1–aspartate 206 the chain is on the cytoplasmic side. Residues threonine 62–serine 80 show a composition bias toward polar residues. Serine 67 and serine 112 each carry phosphoserine. The chain crosses the membrane as a helical span at residues tryptophan 207 to isoleucine 227. Residue glycine 228 is a topological domain, extracellular. Residues phenylalanine 229 to tyrosine 249 form a helical membrane-spanning segment. The Cytoplasmic segment spans residues threonine 250 to glutamine 1545. Residues arginine 272–glutamate 479 form the SMP-LTD domain. The C2 1 domain maps to proline 470–threonine 596. Residues glutamate 620–threonine 660 are a coiled coil. Basic and acidic residues predominate over residues glutamate 624–aspartate 641. Residues glutamate 624 to threonine 660 are disordered. Residues glutamate 642–serine 658 are compositionally biased toward acidic residues. 2 consecutive C2 domains span residues threonine 646–phenylalanine 763 and methionine 783–tyrosine 897. The stretch at serine 937–asparagine 972 forms a coiled coil. One can recognise a C2 4 domain in the interval proline 1119–leucine 1234. Residues aspartate 1150, aspartate 1156, aspartate 1204, aspartate 1206, and aspartate 1212 each coordinate Ca(2+). The interval leucine 1304–serine 1404 is disordered. Over residues serine 1318 to lysine 1328 the composition is skewed to polar residues. Residues lysine 1329–serine 1340 are compositionally biased toward basic and acidic residues. Serine 1340, serine 1342, and serine 1346 each carry phosphoserine. Polar residues predominate over residues proline 1341 to proline 1351. Threonine 1350 bears the Phosphothreonine mark. Residue serine 1354 is modified to Phosphoserine. A compositionally biased stretch (polar residues) spans valine 1361–serine 1373. Low complexity predominate over residues lysine 1377–serine 1404. Residues serine 1396–leucine 1514 form the C2 5 domain. Position 1400 is a phosphoserine (serine 1400).

The protein belongs to the tricalbin family. In terms of assembly, interacts with TCB2 via its C-terminal domain. The cofactor is Ca(2+).

The protein localises to the cell membrane. Its subcellular location is the endoplasmic reticulum membrane. Functionally, may play a role in membrane trafficking. In Saccharomyces cerevisiae (strain ATCC 204508 / S288c) (Baker's yeast), this protein is Tricalbin-3 (TCB3).